We begin with the raw amino-acid sequence, 193 residues long: MTEYVLLLIGTVLVNNFVLVQFLGLCPFMGVSSKLDTAIGMSLATTFVLTLASVTSYLVNQYILIPLDITYLRTMSFILVIAVVVQFTEMVVRKTSPTLYRLLGIFLPLITTNCAVLGVALLNIKEDHSFLQSAVYGFGAAVGFSLVLVLFAALRERLAAADVPTPFKGASIALITAGLMSMAFMGFTGLVKF.

The next 6 membrane-spanning stretches (helical) occupy residues 5–25 (VLLLIGTVLVNNFVLVQFLGL), 39–59 (IGMSLATTFVLTLASVTSYLV), 63–83 (ILIPLDITYLRTMSFILVIAV), 102–122 (LLGIFLPLITTNCAVLGVALL), 134–154 (AVYGFGAAVGFSLVLVLFAAL), and 171–191 (SIALITAGLMSMAFMGFTGLV).

The protein belongs to the NqrDE/RnfAE family. In terms of assembly, the complex is composed of six subunits: RnfA, RnfB, RnfC, RnfD, RnfE and RnfG.

The protein localises to the cell inner membrane. Functionally, part of a membrane-bound complex that couples electron transfer with translocation of ions across the membrane. This is Ion-translocating oxidoreductase complex subunit A from Pseudoalteromonas translucida (strain TAC 125).